The sequence spans 182 residues: Putative manganese efflux pump MntP (182 aa).

The next 6 helical transmembrane spans lie at 6–26 (TVLV…GVGT), 37–57 (LSFH…FVGS), 59–79 (AADL…LFIG), 104–126 (SSLV…SFGI), 131–149 (LFLS…TWGA), and 164–181 (METV…KLLL).

Belongs to the MntP (TC 9.B.29) family.

It localises to the cell inner membrane. Functionally, probably functions as a manganese efflux pump. In Syntrophobacter fumaroxidans (strain DSM 10017 / MPOB), this protein is Putative manganese efflux pump MntP.